We begin with the raw amino-acid sequence, 478 residues long: uncharacterized protein (478 aa).

Residues 5 to 85 (KRIYVGGLSS…SKLRIEEARP (81 aa)) form the RRM domain. Phosphoserine is present on residues S207 and S308.

The protein resides in the nucleus. It is found in the nucleolus. This is an uncharacterized protein from Schizosaccharomyces pombe (strain 972 / ATCC 24843) (Fission yeast).